The following is a 669-amino-acid chain: Zeaxanthin epoxidase, chloroplastic (669 aa).

The N-terminal 49 residues, 1–49 (MYSTVFYTSVHPSTSVLSRKQLPLLISKDFSAELYHSLPCRSLENGHIN), are a transit peptide targeting the chloroplast. FAD is bound by residues 87 to 115 (KVLV…LVFE) and 365 to 378 (TFSW…LLGD). The FHA domain maps to 553-617 (IVLSRDEDVP…HGTWVTDNEG (65 aa)).

FAD is required as a cofactor.

The protein localises to the plastid. It localises to the chloroplast. It carries out the reaction all-trans-zeaxanthin + 4 reduced [2Fe-2S]-[ferredoxin] + 2 O2 + 4 H(+) = all-trans-violaxanthin + 4 oxidized [2Fe-2S]-[ferredoxin] + 2 H2O. Its pathway is plant hormone biosynthesis; abscisate biosynthesis. Functionally, converts zeaxanthin into antheraxanthin and subsequently violaxanthin. Involved in the epoxidation of zeaxanthin. Plays an important role in resistance to stresses, seed development and dormancy. This Solanum lycopersicum (Tomato) protein is Zeaxanthin epoxidase, chloroplastic.